A 380-amino-acid chain; its full sequence is MANIRKTHPLLKIINGAFIDLPTPSNISVWWNFGSLLGLCLVTQILTGLFLAMHYTADISTAFSSVAHICRDVNYGWLIRNIHANGASFFFICLYLHVARGMYYGSYLQKETWNIGVILLLLTMMTAFVGYVLPWGQMSFWGATVITNLLSAFPYIGDTLVQWIWGGFSVDNGTLTRFFAFHFLLPFVIAGASMIHLLVLHQTGSNNPTGLNSDADKVTFHPYFSYKDLFGFILMLVGLTSVALFSPNLLGDPDNFTPANPLVTPPHIKPEWYFLFAYAILRSIPNKLGGVLALLFSILVLMLVPMLHTSKQRGNTFRPPSQILFWALVADMLVLTWIGGQPVEHPFVLIGQVASTIYFALFLIALPLTGWLENKALNWN.

4 helical membrane-spanning segments follow: residues 33–53, 77–98, 113–133, and 178–198; these read FGSLLGLCLVTQILTGLFLAM, WLIRNIHANGASFFFICLYLHV, WNIGVILLLLTMMTAFVGYVL, and FFAFHFLLPFVIAGASMIHLL. Heme b contacts are provided by histidine 83 and histidine 97. Residues histidine 182 and histidine 196 each coordinate heme b. Histidine 201 contacts a ubiquinone. Helical transmembrane passes span 226-246, 288-308, 320-340, and 347-367; these read YKDLFGFILMLVGLTSVALFS, LGGVLALLFSILVLMLVPMLH, PSQILFWALVADMLVLTWIGG, and FVLIGQVASTIYFALFLIALP.

This sequence belongs to the cytochrome b family. As to quaternary structure, the cytochrome bc1 complex contains 3 respiratory subunits (MT-CYB, CYC1 and UQCRFS1), 2 core proteins (UQCRC1 and UQCRC2) and probably 6 low-molecular weight proteins. Requires heme b as cofactor.

It is found in the mitochondrion inner membrane. Functionally, component of the ubiquinol-cytochrome c reductase complex (complex III or cytochrome b-c1 complex) that is part of the mitochondrial respiratory chain. The b-c1 complex mediates electron transfer from ubiquinol to cytochrome c. Contributes to the generation of a proton gradient across the mitochondrial membrane that is then used for ATP synthesis. The sequence is that of Cytochrome b (mt-cyb) from Acipenser sinensis (Chinese sturgeon).